Consider the following 1433-residue polypeptide: Regulatory protein CAT8 (1433 aa).

The segment covering glycine 20–alanine 38 has biased composition (polar residues). Positions glycine 20–proline 40 are disordered. A DNA-binding region (zn(2)-C6 fungal-type) is located at residues cysteine 70–cysteine 97. The span at lysine 936–serine 946 shows a compositional bias: polar residues. Disordered regions lie at residues lysine 936–lysine 1024, glutamine 1137–serine 1162, serine 1200–serine 1236, and leucine 1324–lysine 1433. 2 stretches are compositionally biased toward basic and acidic residues: residues leucine 947–tyrosine 965 and leucine 994–lysine 1005. Composition is skewed to polar residues over residues asparagine 1138 to serine 1162, proline 1221 to glycine 1235, and proline 1326 to arginine 1348. Residues serine 1349 to serine 1362 are compositionally biased toward low complexity. 2 stretches are compositionally biased toward polar residues: residues glutamine 1363–serine 1391 and serine 1418–lysine 1433.

Post-translationally, could be the target of the SNF1/CAT1 - SNF4/CAT3 kinase complex.

It is found in the nucleus. Its function is as follows. Activator of the gluconeogenic enzymes FBP1 and PCK1 genes. This is Regulatory protein CAT8 (CAT8) from Saccharomyces cerevisiae (strain ATCC 204508 / S288c) (Baker's yeast).